Here is a 393-residue protein sequence, read N- to C-terminus: MNQKAYFGEFGGSFVSELLVPALRELEQAFDTCLKDEEFQKEYFRLLKDFVGRPSPLTLCQNIVSNPKVKLYLKREDLIHGGAHKTNQALGQALLAKKMGKTRIIAETGAGQHGVATAIACALLNLKCVIFMGGKDIKRQEMNVFRMRLLGAEVREVNSGSATLKDAVNEALRDWASSYKDTHYLLGTSAGPHPYPTMVKTFQKMIGDEVKSQILEKENRLPDYVIACVGGGSNAIGIFSAFLNDKEVKLIGVEPAGLGLETNKHGATLNKGRVGILHGNKTYLLQDDEGQIAESHSISAGLDYPGVGPEHSYLKEIGRAVYESASDIEALEAFRLLCQKEGIIPALESSHALAYALKLAQKCAQEKIIVVNLSGRGDKDLSTVYNALKGGLK.

The residue at position 85 (Lys85) is an N6-(pyridoxal phosphate)lysine.

Belongs to the TrpB family. As to quaternary structure, tetramer of two alpha and two beta chains. The cofactor is pyridoxal 5'-phosphate.

The catalysed reaction is (1S,2R)-1-C-(indol-3-yl)glycerol 3-phosphate + L-serine = D-glyceraldehyde 3-phosphate + L-tryptophan + H2O. It participates in amino-acid biosynthesis; L-tryptophan biosynthesis; L-tryptophan from chorismate: step 5/5. Its function is as follows. The beta subunit is responsible for the synthesis of L-tryptophan from indole and L-serine. The sequence is that of Tryptophan synthase beta chain (trpB) from Helicobacter pylori (strain J99 / ATCC 700824) (Campylobacter pylori J99).